We begin with the raw amino-acid sequence, 338 residues long: Cytochrome c biogenesis protein CcsA (338 aa).

8 helical membrane passes run 15 to 35, 36 to 56, 71 to 91, 97 to 117, 142 to 162, 246 to 266, 273 to 293, and 307 to 327; these read FLVL…PNIP, GLTG…ATLL, LYES…VAEW, WVGV…ALSL, VMMI…AFLI, IIGL…VWAN, WSWD…AAYL, and AFLA…VNIL.

Belongs to the CcmF/CycK/Ccl1/NrfE/CcsA family. As to quaternary structure, may interact with ccs1.

The protein resides in the cellular thylakoid membrane. In terms of biological role, required during biogenesis of c-type cytochromes (cytochrome c6 and cytochrome f) at the step of heme attachment. This Picosynechococcus sp. (strain ATCC 27264 / PCC 7002 / PR-6) (Agmenellum quadruplicatum) protein is Cytochrome c biogenesis protein CcsA.